The primary structure comprises 561 residues: Long-chain-fatty-acid--CoA ligase (561 aa).

213–224 (YTGGTTGVAKGA) is an ATP binding site.

The protein belongs to the ATP-dependent AMP-binding enzyme family. The cofactor is Mg(2+).

Its subcellular location is the membrane. The catalysed reaction is a long-chain fatty acid + ATP + CoA = a long-chain fatty acyl-CoA + AMP + diphosphate. Its pathway is lipid metabolism; fatty acid beta-oxidation. Catalyzes the esterification, concomitant with transport, of exogenous long-chain fatty acids into metabolically active CoA thioesters for subsequent degradation or incorporation into phospholipids. In Salmonella typhi, this protein is Long-chain-fatty-acid--CoA ligase (fadD).